Consider the following 388-residue polypeptide: Processive diacylglycerol beta-glucosyltransferase (388 aa).

It belongs to the glycosyltransferase 28 family. UgtP subfamily.

Its subcellular location is the cell membrane. It catalyses the reaction a 1,2-diacyl-3-O-(beta-D-glucopyranosyl)-sn-glycerol + UDP-alpha-D-glucose = a 1,2-diacyl-3-O-(beta-D-Glc-(1-&gt;6)-beta-D-Glc)-sn-glycerol + UDP + H(+). The enzyme catalyses a 1,2-diacyl-3-O-(beta-D-Glc-(1-&gt;6)-beta-D-Glc)-sn-glycerol + UDP-alpha-D-glucose = a 1,2-diacyl-3-O-(beta-D-Glc-(1-&gt;6)-beta-D-Glc-(1-&gt;6)-beta-D-Glc)-sn-glycerol + UDP + H(+). It carries out the reaction a 1,2-diacyl-sn-glycerol + UDP-alpha-D-glucose = a 1,2-diacyl-3-O-(beta-D-glucopyranosyl)-sn-glycerol + UDP + H(+). The protein operates within glycolipid metabolism; diglucosyl-diacylglycerol biosynthesis. Its function is as follows. Processive glucosyltransferase involved in the biosynthesis of both the bilayer- and non-bilayer-forming membrane glucolipids. Is able to successively transfer up to three glucosyl residues to diacylglycerol (DAG), thereby catalyzing the formation of beta-monoglucosyl-DAG (3-O-(beta-D-glucopyranosyl)-1,2-diacyl-sn-glycerol), beta-diglucosyl-DAG (3-O-(beta-D-glucopyranosyl-beta-(1-&gt;6)-D-glucopyranosyl)-1,2-diacyl-sn-glycerol) and beta-triglucosyl-DAG (3-O-(beta-D-glucopyranosyl-beta-(1-&gt;6)-D-glucopyranosyl-beta-(1-&gt;6)-D-glucopyranosyl)-1,2-diacyl-sn-glycerol). Beta-diglucosyl-DAG is the predominant glycolipid found in Bacillales and is also used as a membrane anchor for lipoteichoic acid (LTA). This chain is Processive diacylglycerol beta-glucosyltransferase, found in Bacillus cereus (strain ZK / E33L).